Here is a 148-residue protein sequence, read N- to C-terminus: Small ribosomal subunit protein uS13 (148 aa).

It belongs to the universal ribosomal protein uS13 family. Part of the 30S ribosomal subunit. Forms a loose heterodimer with protein S19. Forms two bridges to the 50S subunit in the 70S ribosome.

Located at the top of the head of the 30S subunit, it contacts several helices of the 16S rRNA. In the 70S ribosome it contacts the 23S rRNA (bridge B1a) and protein L5 of the 50S subunit (bridge B1b), connecting the 2 subunits; these bridges are implicated in subunit movement. This Pyrococcus horikoshii (strain ATCC 700860 / DSM 12428 / JCM 9974 / NBRC 100139 / OT-3) protein is Small ribosomal subunit protein uS13.